Here is a 298-residue protein sequence, read N- to C-terminus: Small ribosomal subunit protein uS3 (298 aa).

The KH type-2 domain maps to 38 to 106 (IRRRLSRGME…QVQLNILEVK (69 aa)). A disordered region spans residues 212 to 298 (KQKQQESEVR…EPRADEKTEG (87 aa)). A compositionally biased stretch (basic and acidic residues) spans 214-237 (KQQESEVRPPRGERGERGGRPERG). The segment covering 265–278 (GSAQSPEQAQTSGD) has biased composition (polar residues).

This sequence belongs to the universal ribosomal protein uS3 family. Part of the 30S ribosomal subunit. Forms a tight complex with proteins S10 and S14.

Functionally, binds the lower part of the 30S subunit head. Binds mRNA in the 70S ribosome, positioning it for translation. In Saccharopolyspora erythraea (strain ATCC 11635 / DSM 40517 / JCM 4748 / NBRC 13426 / NCIMB 8594 / NRRL 2338), this protein is Small ribosomal subunit protein uS3.